The sequence spans 298 residues: Protoheme IX farnesyltransferase (298 aa).

Helical transmembrane passes span 16 to 36 (VVAL…PDMP), 45 to 65 (ALGF…NQLL), 93 to 113 (VFAG…VNVI), 114 to 134 (TAVL…VYLK), 141 to 161 (IVIG…AVTG), 172 to 192 (SLLV…LAIF), 223 to 243 (VLLA…VFYL), 244 to 264 (GGAV…LNPP), and 277 to 297 (IVYL…LPWV).

This sequence belongs to the UbiA prenyltransferase family. Protoheme IX farnesyltransferase subfamily.

It is found in the cell inner membrane. It carries out the reaction heme b + (2E,6E)-farnesyl diphosphate + H2O = Fe(II)-heme o + diphosphate. Its pathway is porphyrin-containing compound metabolism; heme O biosynthesis; heme O from protoheme: step 1/1. Converts heme B (protoheme IX) to heme O by substitution of the vinyl group on carbon 2 of heme B porphyrin ring with a hydroxyethyl farnesyl side group. In Xanthomonas oryzae pv. oryzae (strain MAFF 311018), this protein is Protoheme IX farnesyltransferase.